Here is a 414-residue protein sequence, read N- to C-terminus: L-cysteine:1D-myo-inositol 2-amino-2-deoxy-alpha-D-glucopyranoside ligase (414 aa).

Zn(2+) is bound at residue Cys43. L-cysteinyl-5'-AMP is bound by residues 43–46 (CGIT), Thr58, and 81–83 (NVT). The short motif at 45–55 (ITPYDATHLGH) is the 'HIGH' region element. The 'ERGGDP' region motif lies at 187 to 192 (ERGGDP). Trp227 is a binding site for L-cysteinyl-5'-AMP. Cys231 lines the Zn(2+) pocket. Position 249 to 251 (249 to 251 (GSD)) interacts with L-cysteinyl-5'-AMP. His256 contacts Zn(2+). L-cysteinyl-5'-AMP is bound at residue Ile283. A 'KMSKS' region motif is present at residues 289-293 (KMSKS).

Belongs to the class-I aminoacyl-tRNA synthetase family. MshC subfamily. In terms of assembly, monomer. Zn(2+) serves as cofactor.

It carries out the reaction 1D-myo-inositol 2-amino-2-deoxy-alpha-D-glucopyranoside + L-cysteine + ATP = 1D-myo-inositol 2-(L-cysteinylamino)-2-deoxy-alpha-D-glucopyranoside + AMP + diphosphate + H(+). Catalyzes the ATP-dependent condensation of GlcN-Ins and L-cysteine to form L-Cys-GlcN-Ins. This chain is L-cysteine:1D-myo-inositol 2-amino-2-deoxy-alpha-D-glucopyranoside ligase, found in Tsukamurella paurometabola (strain ATCC 8368 / DSM 20162 / CCUG 35730 / CIP 100753 / JCM 10117 / KCTC 9821 / NBRC 16120 / NCIMB 702349 / NCTC 13040) (Corynebacterium paurometabolum).